Here is a 410-residue protein sequence, read N- to C-terminus: Sprouty-related, EVH1 domain-containing protein 3 (410 aa).

The 113-residue stretch at 1–113 (MVRVRAVVMA…KSLLAALAAL (113 aa)) folds into the WH1 domain. The disordered stretch occupies residues 117–210 (SLTPSSSSSS…PEPSEPLAGA (94 aa)). Composition is skewed to low complexity over residues 120–130 (PSSSSSSSSPS) and 147–165 (DSSS…AAAP). In terms of domain architecture, KBD spans 195-244 (LPFTGIPEPSEPLAGAGGLGWGGRGYEDYRRSGPPAPLALSTCVVRFAKT). Arg240 is modified (asymmetric dimethylarginine). Residue Arg248 is modified to Omega-N-methylarginine. The disordered stretch occupies residues 258 to 288 (LPAPLTEAAPPAPPARPPPGPGPSSAPAKAS). Residues 267 to 281 (PPAPPARPPPGPGPS) show a composition bias toward pro residues. The 112-residue stretch at 296-407 (RCVHCRALFR…CAGCGGRHEE (112 aa)) folds into the SPR domain.

Interacts with palmitoyltransferase ZDHHC17/HIP14; the interaction leads to palmitoylation of SPRED3. In terms of processing, phosphorylated on tyrosine. Palmitoylated by ZDHHC17/HIP14. Post-translationally, ubiquitinated.

The protein localises to the cell membrane. Its function is as follows. Tyrosine kinase substrate that inhibits growth-factor-mediated activation of MAP kinase. Inhibits fibroblast growth factor (FGF)-induced retinal lens fiber differentiation, probably by inhibiting FGF-mediated phosphorylation of ERK1/2. Inhibits TGFB-induced epithelial-to-mesenchymal transition in lens epithelial cells. This is Sprouty-related, EVH1 domain-containing protein 3 (SPRED3) from Homo sapiens (Human).